Here is a 198-residue protein sequence, read N- to C-terminus: Dynein axonemal light chain 1 (198 aa).

LRR repeat units lie at residues 49–70 (ACKH…SGME), 71–92 (NLRI…DAVA), 94–115 (TLEE…EKLV), and 116–137 (NLRV…DKLA). Residues 157–195 (KENNATSEYRIEVVKRLPNLKKLDGMPVDVDEREQANVA) form the LRRCT domain.

It belongs to the dynein light chain LC1-type family. In terms of assembly, interacts with OCAD2, a outer arm dynein heavy chain. Interacts with tubulin (previously called p45) located within the A-tubule of the outer doublets in a ATP-independent manner.

The protein resides in the cytoplasm. It is found in the cytoskeleton. Its subcellular location is the flagellum axoneme. In terms of biological role, part of the multisubunit axonemal ATPase complexes that generate the force for flagellar motility and govern beat frequency. Component of the outer arm dynein (ODA). May be involved in a mechanosensory feedback mechanism controlling ODA activity based on external conformational cues by tethering the outer arm dynein heavy chain (ODA2) to the A-tubule of the outer doublet microtubules within the axoneme. In Chlamydomonas reinhardtii (Chlamydomonas smithii), this protein is Dynein axonemal light chain 1.